A 203-amino-acid chain; its full sequence is Outer-membrane lipoprotein carrier protein (203 aa).

Positions 1–21 (MKKLIISCCLLATFSAAGAWA) are cleaved as a signal peptide. Residues 174 to 203 (ALKSQQSGPISADKFKFRPPKGVTVDDQRQ) form a disordered region.

This sequence belongs to the LolA family. As to quaternary structure, monomer.

The protein resides in the periplasm. In terms of biological role, participates in the translocation of lipoproteins from the inner membrane to the outer membrane. Only forms a complex with a lipoprotein if the residue after the N-terminal Cys is not an aspartate (The Asp acts as a targeting signal to indicate that the lipoprotein should stay in the inner membrane). The protein is Outer-membrane lipoprotein carrier protein of Erwinia tasmaniensis (strain DSM 17950 / CFBP 7177 / CIP 109463 / NCPPB 4357 / Et1/99).